Here is a 56-residue protein sequence, read N- to C-terminus: Small ribosomal subunit protein uS14 (56 aa).

The protein belongs to the universal ribosomal protein uS14 family.

The protein is Small ribosomal subunit protein uS14 (RPS29) of Kluyveromyces lactis (strain ATCC 8585 / CBS 2359 / DSM 70799 / NBRC 1267 / NRRL Y-1140 / WM37) (Yeast).